We begin with the raw amino-acid sequence, 617 residues long: Dihydroxy-acid dehydratase (617 aa).

Asp81 is a Mg(2+) binding site. Cys122 contributes to the [2Fe-2S] cluster binding site. Mg(2+)-binding residues include Asp123 and Lys124. An N6-carboxylysine modification is found at Lys124. Position 195 (Cys195) interacts with [2Fe-2S] cluster. Mg(2+) is bound at residue Glu491. Ser517 (proton acceptor) is an active-site residue.

It belongs to the IlvD/Edd family. Homodimer. [2Fe-2S] cluster serves as cofactor. Requires Mg(2+) as cofactor.

The catalysed reaction is (2R)-2,3-dihydroxy-3-methylbutanoate = 3-methyl-2-oxobutanoate + H2O. The enzyme catalyses (2R,3R)-2,3-dihydroxy-3-methylpentanoate = (S)-3-methyl-2-oxopentanoate + H2O. The protein operates within amino-acid biosynthesis; L-isoleucine biosynthesis; L-isoleucine from 2-oxobutanoate: step 3/4. Its pathway is amino-acid biosynthesis; L-valine biosynthesis; L-valine from pyruvate: step 3/4. Its function is as follows. Functions in the biosynthesis of branched-chain amino acids. Catalyzes the dehydration of (2R,3R)-2,3-dihydroxy-3-methylpentanoate (2,3-dihydroxy-3-methylvalerate) into 2-oxo-3-methylpentanoate (2-oxo-3-methylvalerate) and of (2R)-2,3-dihydroxy-3-methylbutanoate (2,3-dihydroxyisovalerate) into 2-oxo-3-methylbutanoate (2-oxoisovalerate), the penultimate precursor to L-isoleucine and L-valine, respectively. The sequence is that of Dihydroxy-acid dehydratase from Buchnera aphidicola subsp. Acyrthosiphon pisum (strain 5A).